Here is a 259-residue protein sequence, read N- to C-terminus: uncharacterized protein (259 aa).

3 disordered regions span residues 22-68 (GLQP…VSFG), 111-133 (REEQ…DEVE), and 181-202 (LGGK…KKKQ). Residues 50–63 (NEEEDAISDMEDKE) show a composition bias toward acidic residues. At S127 the chain carries Phosphoserine.

This is an uncharacterized protein from Schizosaccharomyces pombe (strain 972 / ATCC 24843) (Fission yeast).